A 130-amino-acid polypeptide reads, in one-letter code: Small ribosomal subunit protein uS9 (130 aa).

This sequence belongs to the universal ribosomal protein uS9 family.

The protein is Small ribosomal subunit protein uS9 of Edwardsiella ictaluri (strain 93-146).